The sequence spans 163 residues: Odorant-binding protein 1a (163 aa).

Residues M1–A16 form the signal peptide. 2 cysteine pairs are disulfide-bonded: C50/C54 and C69/C161.

It belongs to the calycin superfamily. Lipocalin family. As to quaternary structure, may form a heterodimer with OBP1B. In terms of processing, the N-terminus may be blocked. Expressed in nasal mucosa (at protein level). Specifically detected in septal and lateral nasal glands.

It is found in the secreted. Functionally, binds the chemical odorant 2-isobutyl-3-methoxypyrazine. The chain is Odorant-binding protein 1a from Mus musculus (Mouse).